A 197-amino-acid chain; its full sequence is CRISPR system CMR subunit Cmr7 1 (197 aa).

This sequence belongs to the CRISPR system Cmr7 family. Possible homodimer. Part of the CMR ribonucleoprotein complex, consisting of crRNA plus Cmr1/Cmr2/Cmr3/Cmr4/Cmr5/Cmr6 at 1:1 and possibly 3 Cmr7 dimers. A Cmr2/Cmr3/Cmr7 subcomplex without crRNA can also be isolated. It does not cleave target RNA.

It localises to the cytoplasm. In terms of biological role, CRISPR (clustered regularly interspaced short palindromic repeat) is an adaptive immune system that provides protection against mobile genetic elements (viruses, transposable elements and conjugative plasmids). CRISPR clusters contain spacers, sequences complementary to antecedent mobile elements, and target invading nucleic acids. CRISPR clusters are transcribed and processed into CRISPR RNA (crRNA). The CMR complex degrades RNA complementary to the crRNA (target RNA) within UA dinucleotides, generating 3'-OH and 5'-phosphate ends. Activity is dependent on the 8 nt long 5' tag in the crRNA, an unpaired 3' flag on the target RNA, and is stimulated by ATP. Some cleavage of the guide crRNA can also be observed. In Saccharolobus solfataricus (strain ATCC 35092 / DSM 1617 / JCM 11322 / P2) (Sulfolobus solfataricus), this protein is CRISPR system CMR subunit Cmr7 1 (cmr7A).